Consider the following 445-residue polypeptide: MAIKIRKLDSAGEGFAAELRAVLAFEASEDDAIERAVAQILADVKARGDAAVLDYTNRFDRLNAASVAALELPQSELEAALEGLEPKRRAALEAAAARVRGYHEKQKIECGSHSWQYTEADGTVLGQKVTPLDRVGLYVPGGKAAYPSSVLMNAIPARVAGVGEIVMVVPTPDGLKNDLVLAAALLGGVDRVFTIGGAQAVAALAYGTQTVPAVDKICGPGNAYVASAKRRVFGTVGIDMIAGPSEILVLCDGTTDPSWVAMDLFSQAEHDELAQSILLCPDEAFIERVEKAIGELLPTMPRQDVIRASLEGRGALVKVRDMAEACRIANDIAPEHLEISALEPHQWGKQIRHAGAIFLGRYTSESLGDYCAGPNHVLPTSRTARFSSPLGVYDFFKRSSLIEVSAEGAHTLGEIASELAYGEGLQAHAKSAEYRMKGAGDRQKG.

Positions 138, 199, and 222 each coordinate NAD(+). Substrate is bound by residues Ser245, Gln267, and His270. The Zn(2+) site is built by Gln267 and His270. Active-site proton acceptor residues include Glu335 and His336. Substrate is bound by residues His336, Asp369, Glu423, and His428. Position 369 (Asp369) interacts with Zn(2+). Zn(2+) is bound at residue His428.

Belongs to the histidinol dehydrogenase family. Zn(2+) is required as a cofactor.

It catalyses the reaction L-histidinol + 2 NAD(+) + H2O = L-histidine + 2 NADH + 3 H(+). It functions in the pathway amino-acid biosynthesis; L-histidine biosynthesis; L-histidine from 5-phospho-alpha-D-ribose 1-diphosphate: step 9/9. In terms of biological role, catalyzes the sequential NAD-dependent oxidations of L-histidinol to L-histidinaldehyde and then to L-histidine. The protein is Histidinol dehydrogenase of Burkholderia mallei (strain ATCC 23344).